The primary structure comprises 354 residues: Homer protein homolog 1 (354 aa).

The 110-residue stretch at 1 to 110 (MGEQPIFSTR…EKFQEFKEAA (110 aa)) folds into the WH1 domain. Gly-2 carries the N-acetylglycine modification. Residues 114–172 (KEKSQEKMELTSTPSQESAGGDLQSPLTPESINGTDDERTPDLTQNSEPRPEPTQNALP) form a disordered region. Polar residues-rich tracts occupy residues 138 to 147 (SPLTPESING) and 155 to 172 (DLTQNSEPRPEPTQNALP). Positions 181–352 (KHWEAELATL…LRDNLAKLLE (172 aa)) form a coiled coil. The required for tetramerization stretch occupies residues 290-354 (KLQEVEIRNK…DNLAKLLERS (65 aa)). Ser-306 bears the Phosphoserine mark.

This sequence belongs to the Homer family. Tetramer; this tetrameric structure is critical for forming the high-order complex with SHANK1, which in turn is necessary for the structural and functional integrity of dendritic spines. Interacts with GRM1, GRM5, ITPR1, DNM3, RYR1, RYR2 and SHANK3. Interacts with IFT57 and OPHN1. Encodes a coiled-coil structure that mediates homo- and heteromultimerization. Interacts with SHANK1; forms high-order polymerized complex with a mesh-like network structure, at least composed of SHANK1, HOMER1 and DLGAP1; the complex formation is SHANK1 multimerization dependent. Interacts with NFATC4. Interacts with DAGLA (via PPXXF motif); this interaction is required for the cell membrane localization of DAGLA. Interacts with SRGAP2.

The protein resides in the cytoplasm. Its subcellular location is the postsynaptic density. The protein localises to the synapse. It is found in the cell projection. It localises to the dendritic spine. In terms of biological role, postsynaptic density scaffolding protein. Binds and cross-links cytoplasmic regions of GRM1, GRM5, ITPR1, DNM3, RYR1, RYR2, SHANK1 and SHANK3. By physically linking GRM1 and GRM5 with ER-associated ITPR1 receptors, it aids the coupling of surface receptors to intracellular calcium release. May also couple GRM1 to PI3 kinase through its interaction with AGAP2. Forms a high-order complex with SHANK1, which in turn is necessary for the structural and functional integrity of dendritic spines. Negatively regulates T cell activation by inhibiting the calcineurin-NFAT pathway. Acts by competing with calcineurin/PPP3CA for NFAT protein binding, hence preventing NFAT activation by PPP3CA. The chain is Homer protein homolog 1 from Bos taurus (Bovine).